The sequence spans 94 residues: Large ribosomal subunit protein bL27 (94 aa).

A propeptide spanning residues 1-9 (MLELNLQLF) is cleaved from the precursor. The tract at residues 12-33 (KKGGGSTSNGRDSQAKRLGAKA) is disordered.

Belongs to the bacterial ribosomal protein bL27 family. The N-terminus is cleaved by ribosomal processing cysteine protease Prp.

The protein is Large ribosomal subunit protein bL27 of Lactococcus lactis subsp. lactis (strain IL1403) (Streptococcus lactis).